Consider the following 202-residue polypeptide: Inner membrane-spanning protein YciB (202 aa).

Helical transmembrane passes span 3–23 (FFLDLLPVILFFVAYKFAGAA), 46–66 (ILIATAVAIAATLAQVLIVWL), 74–94 (MLWVSLAIITLFGGATLVFHN), 100–120 (WKPTVFYWTFAGALAVSALLF), 145–165 (LAWIGFFTLMGFLNLYVAYGY), and 173–193 (FKLFGAMGLMLAFFLGQGFYL).

Belongs to the YciB family.

The protein localises to the cell inner membrane. In terms of biological role, plays a role in cell envelope biogenesis, maintenance of cell envelope integrity and membrane homeostasis. The sequence is that of Inner membrane-spanning protein YciB from Azoarcus sp. (strain BH72).